A 464-amino-acid chain; its full sequence is MSTMSARDNEKGSARSQPSHAAASEIENVPRPSRQQSWTGTMIKVFIICACAGIVSKYIIPLDSIFKSVHIDPHDYATRANRILSTTPLIDGHNDLPYLIRLETKNKIYDHEKLPFRTGLLSHTDQIKIQEGKLGGQFWSVFVECATDPNAEIDDPTWAVRDTLEQIDVTKRLVQEYPDLLEYCESASCAKAAFKRGKVGSFLGIEGGHQIGNSLASLRQVYDLGVRYITVTHNCDNAFATAASTVAVGKPDLGLTDFGREFVKEMNRLGMLVDLSHVSHQTMRDILSVTKAPVMFSHSSSYALSKHLRNVPDDVLNGVTKNGGVVMVTFVPSFLKVDDPASATIHDAVDHILHVAKVAGWDHVGIGSDFDGTADVPEGLENVSKYPRLIELLLERGVTDEQARKLIGENILRVWSNVEEIAENIRALGEKPNEETWSGRKWTAAIDIPMPFMFKDSADKRKEL.

The interval 1–34 (MSTMSARDNEKGSARSQPSHAAASEIENVPRPSR) is disordered. A helical transmembrane segment spans residues 40–56 (GTMIKVFIICACAGIVS). Zn(2+) is bound by residues H93, D95, and E206. C145 and C235 are oxidised to a cystine. H233 serves as a coordination point for substrate. Zn(2+) is bound by residues H277 and H298. Substrate-binding residues include R309 and D369. N382 is a glycosylation site (N-linked (GlcNAc...) asparagine).

Belongs to the metallo-dependent hydrolases superfamily. Peptidase M19 family. It depends on Zn(2+) as a cofactor.

It localises to the membrane. The enzyme catalyses an L-aminoacyl-L-amino acid + H2O = 2 an L-alpha-amino acid. Functionally, hydrolyzes a wide range of dipeptides. This Coccidioides posadasii (strain C735) (Valley fever fungus) protein is Putative dipeptidase CPC735_014430.